Here is a 36-residue protein sequence, read N- to C-terminus: Photosystem I reaction center subunit VIII (36 aa).

Residues 9 to 29 (IFVPLVGLVFPAVAMASLFLY) traverse the membrane as a helical segment.

It belongs to the PsaI family.

It is found in the plastid. Its subcellular location is the chloroplast thylakoid membrane. May help in the organization of the PsaL subunit. This is Photosystem I reaction center subunit VIII from Ostreococcus tauri.